A 199-amino-acid chain; its full sequence is Elongation factor Ts (199 aa).

Residues 80 to 83 (TDFV) are involved in Mg(2+) ion dislocation from EF-Tu.

It belongs to the EF-Ts family.

It is found in the cytoplasm. In terms of biological role, associates with the EF-Tu.GDP complex and induces the exchange of GDP to GTP. It remains bound to the aminoacyl-tRNA.EF-Tu.GTP complex up to the GTP hydrolysis stage on the ribosome. This is Elongation factor Ts from Thermodesulfovibrio yellowstonii (strain ATCC 51303 / DSM 11347 / YP87).